Consider the following 292-residue polypeptide: Nitrogenase iron protein (292 aa).

An ATP-binding site is contributed by 8–15; sequence GKGGIGKS. C96 contacts [4Fe-4S] cluster. R99 carries the ADP-ribosylarginine; by dinitrogenase reductase ADP-ribosyltransferase modification. Residue C130 participates in [4Fe-4S] cluster binding.

It belongs to the NifH/BchL/ChlL family. In terms of assembly, homodimer. [4Fe-4S] cluster serves as cofactor. In terms of processing, the reversible ADP-ribosylation of Arg-99 inactivates the nitrogenase reductase and regulates nitrogenase activity.

It carries out the reaction N2 + 8 reduced [2Fe-2S]-[ferredoxin] + 16 ATP + 16 H2O = H2 + 8 oxidized [2Fe-2S]-[ferredoxin] + 2 NH4(+) + 16 ADP + 16 phosphate + 6 H(+). Functionally, the key enzymatic reactions in nitrogen fixation are catalyzed by the nitrogenase complex, which has 2 components: the iron protein and the molybdenum-iron protein. The protein is Nitrogenase iron protein of Synechococcus sp. (strain JA-3-3Ab) (Cyanobacteria bacterium Yellowstone A-Prime).